The sequence spans 621 residues: DnaJ homolog subfamily C member 2 (621 aa).

M1 bears the N-acetylmethionine mark. Phosphoserine occurs at positions 47, 49, 60, and 63. Positions 88-161 constitute a J domain; the sequence is DHYAVLGLGH…VKRRAFNSVD (74 aa). Positions 160–250 are ZRF1-UBD; it reads VDPTFDNSVP…RDERRWIEKQ (91 aa). S183 is subject to Phosphoserine. Disordered regions lie at residues 294-315 and 426-453; these read EKKAKADAKRKEQEAKEKQRQA and KEEAEARMRQASKNAEKSAGGGGNGSKH. 2 SANT domains span residues 449–511 and 549–604; these read NGSK…KLDP and TDFT…EMVK.

Component of ribosome-associated complex (RAC), a heterodimer composed of Hsp70/DnaK-type chaperone HSPA14 and Hsp40/DnaJ-type chaperone DNAJC2. Interacts (via ZRF1-UBD region) with ID1. Phosphorylated in M (mitotic) phase.

Its subcellular location is the nucleus. It is found in the cytoplasm. The protein resides in the cytosol. Functionally, acts both as a chaperone in the cytosol and as a chromatin regulator in the nucleus. When cytosolic, acts as a molecular chaperone: component of the ribosome-associated complex (RAC), a complex involved in folding or maintaining nascent polypeptides in a folding-competent state. In the RAC complex, stimulates the ATPase activity of the ribosome-associated pool of Hsp70-type chaperones HSPA14 that bind to the nascent polypeptide chain. When nuclear, mediates the switching from polycomb-repressed genes to an active state: specifically recruited at histone H2A ubiquitinated at 'Lys-119' (H2AK119ub), and promotes the displacement of the polycomb PRC1 complex from chromatin, thereby facilitating transcription activation. This Bos taurus (Bovine) protein is DnaJ homolog subfamily C member 2 (DNAJC2).